A 468-amino-acid polypeptide reads, in one-letter code: Aspartate ammonia-lyase (468 aa).

L-aspartate is bound by residues T101, S140, T141, N142, T187, and H188. The tract at residues 317–326 (GSSIMPGKVN) is SS loop. Catalysis depends on S318, which acts as the Proton acceptor. S319 and K324 together coordinate L-aspartate.

Belongs to the class-II fumarase/aspartase family. Aspartase subfamily. As to quaternary structure, homotetramer.

It catalyses the reaction L-aspartate = fumarate + NH4(+). Its activity is regulated as follows. Unlike E.coli aspartase, the enzyme is not activated by the presence of divalent metal ions at alkaline pH. Functionally, catalyzes the reversible conversion of L-aspartate to fumarate and ammonia. Is highly specific for L-aspartate in the deamination reaction, and cannot use alternative substrates such as D-aspartic acid, alpha-methyl-DL-aspartic acid, beta-methyl-DL-aspartic acid or L-glutamate. In the reverse reaction, alternative nucleophiles (such as hydroxylamine, hydrazine, methoxylamine and methylamine) can replace ammonia in vitro, leading to the formation of N-substituted aspartic acid derivatives. This is Aspartate ammonia-lyase from Bacillus sp.